Reading from the N-terminus, the 1190-residue chain is DNA-directed RNA polymerase subunit beta (1190 aa).

Residues 1155-1190 are disordered; the sequence is ENFDDDDDHAPDAIMVDVKPAEREEAGEEKDAVTKE. Positions 1173–1190 are enriched in basic and acidic residues; sequence KPAEREEAGEEKDAVTKE.

It belongs to the RNA polymerase beta chain family. As to quaternary structure, the RNAP catalytic core consists of 2 alpha, 1 beta, 1 beta' and 1 omega subunit. When a sigma factor is associated with the core the holoenzyme is formed, which can initiate transcription.

The catalysed reaction is RNA(n) + a ribonucleoside 5'-triphosphate = RNA(n+1) + diphosphate. Its function is as follows. DNA-dependent RNA polymerase catalyzes the transcription of DNA into RNA using the four ribonucleoside triphosphates as substrates. In Geobacillus kaustophilus (strain HTA426), this protein is DNA-directed RNA polymerase subunit beta.